The chain runs to 178 residues: ATP synthase subunit delta (178 aa).

It belongs to the ATPase delta chain family. In terms of assembly, F-type ATPases have 2 components, F(1) - the catalytic core - and F(0) - the membrane proton channel. F(1) has five subunits: alpha(3), beta(3), gamma(1), delta(1), epsilon(1). F(0) has three main subunits: a(1), b(2) and c(10-14). The alpha and beta chains form an alternating ring which encloses part of the gamma chain. F(1) is attached to F(0) by a central stalk formed by the gamma and epsilon chains, while a peripheral stalk is formed by the delta and b chains.

The protein localises to the cell membrane. Functionally, f(1)F(0) ATP synthase produces ATP from ADP in the presence of a proton or sodium gradient. F-type ATPases consist of two structural domains, F(1) containing the extramembraneous catalytic core and F(0) containing the membrane proton channel, linked together by a central stalk and a peripheral stalk. During catalysis, ATP synthesis in the catalytic domain of F(1) is coupled via a rotary mechanism of the central stalk subunits to proton translocation. In terms of biological role, this protein is part of the stalk that links CF(0) to CF(1). It either transmits conformational changes from CF(0) to CF(1) or is implicated in proton conduction. In Streptococcus equinus (Streptococcus bovis), this protein is ATP synthase subunit delta.